The sequence spans 1883 residues: Endoribonuclease Dicer homolog 1 (1883 aa).

Disordered regions lie at residues 71-97 (AESS…PELP), 129-188 (ARKE…DDRR), and 221-262 (RSGT…EKPV). The segment covering 75–96 (PAPPPPPPPPLPEPVPVAPPEL) has biased composition (pro residues). Composition is skewed to basic and acidic residues over residues 129 to 138 (ARKEPRRESH) and 228 to 262 (ESDR…EKPV). In terms of domain architecture, Helicase ATP-binding spans 274 to 413 (VLEQAKSRNT…QEDCAIKIRN (140 aa)). Position 287–294 (287–294 (LETGAGKT)) interacts with ATP. A DECH box motif is present at residues 358–361 (DECH). Residues 577-604 (KSETSDVEMQNTEKHNTNDLEEGELPDS) are disordered. The Helicase C-terminal domain maps to 629 to 789 (LIKILLKYQH…RTDLSHLDGT (161 aa)). Positions 817–912 (AVGLIHFYCS…LPDRGSGEGE (96 aa)) constitute a Dicer dsRNA-binding fold domain. The interval 901–928 (TLLPDRGSGEGEKTEQNDEGEPLPGTAR) is disordered. Residues 907-916 (GSGEGEKTEQ) show a composition bias toward basic and acidic residues. One can recognise a PAZ domain in the interval 1163-1296 (HFSDYQNQGK…LPPELCLVHP (134 aa)). RNase III domains follow at residues 1320-1498 (LAVQ…VAGG) and 1538-1686 (FDTL…LDSG). Glu-1576, Asp-1672, and Glu-1675 together coordinate Mg(2+). DRBM domains lie at 1712 to 1775 (HPVR…VLKE) and 1797 to 1872 (FTRQ…LLNR).

This sequence belongs to the helicase family. Dicer subfamily. In terms of assembly, may interact with ARGONAUTE1 or PINHEAD through their common PAZ domains. Requires Mg(2+) as cofactor. The cofactor is Mn(2+).

It is found in the nucleus. In terms of biological role, involved in the RNA silencing pathway. Cleaves double-stranded RNA to produce microRNAs (miRNAs) of 21-24 nucleotides which target the selective destruction of complementary RNAs. Regulates by this way the development of the plant. May not be involved in small interfering RNAs (siRNAs) production. The protein is Endoribonuclease Dicer homolog 1 (DCL1) of Oryza sativa subsp. japonica (Rice).